The chain runs to 176 residues: MGVPATRRCVEWLLGIYFLSHIPITLFMDLQAVLPRELYPVEFRNLLKWYAKEFKDPLLQEPPAWFKSFLFCELVFQLPFFPIATYAFLKGSCKWIRTPAIIYSVHTMTTLIPILSTFLFEDFSKASGFKGQRPETLHERLTLISVYAPYLLIPFILLIFMLRSPYYKYEEKRKKK.

Residues 1–9 (MGVPATRRC) lie on the Cytoplasmic side of the membrane. The helical transmembrane segment at 10 to 30 (VEWLLGIYFLSHIPITLFMDL) threads the bilayer. The 149-residue stretch at 10 to 158 (VEWLLGIYFL…PYLLIPFILL (149 aa)) folds into the EXPERA domain. Over 31-68 (QAVLPRELYPVEFRNLLKWYAKEFKDPLLQEPPAWFKS) the chain is Lumenal. The helical transmembrane segment at 69–89 (FLFCELVFQLPFFPIATYAFL) threads the bilayer. 2 residues coordinate cholesterol: Val75 and Gln77. Residues 90 to 99 (KGSCKWIRTP) lie on the Cytoplasmic side of the membrane. A helical transmembrane segment spans residues 100-120 (AIIYSVHTMTTLIPILSTFLF). Over 121-140 (EDFSKASGFKGQRPETLHER) the chain is Lumenal. The helical transmembrane segment at 141 to 161 (LTLISVYAPYLLIPFILLIFM) threads the bilayer. Residues 162 to 176 (LRSPYYKYEEKRKKK) lie on the Cytoplasmic side of the membrane. The short motif at 172–176 (KRKKK) is the ER retention motif element.

Belongs to the TMEM97/sigma-2 receptor family. In terms of assembly, homodimer. Interacts with NPC1; the interaction impairs NPC1-mediated cholesterol transport. Interacts with PGRMC1 and LDLR; the interaction increases LDL internalization. Interacts with histatin 1/HTN1; the interaction induces HTN1-stimulating wound healing. Interacts with TSPO.

The protein localises to the rough endoplasmic reticulum membrane. It is found in the nucleus membrane. Sigma-2 receptor which contributes to ameliorate dysfunctional cellular processes and slow degenerative progression by regulating cell functions including cholesterol biosynthesis/trafficking, membrane trafficking, autophagy, lipid membrane-bound protein trafficking, and receptor stabilization at the cell surface. Forms a ternary complex with PGRMC1 receptor and low density lipoprotein receptor/LDLR at the plasma membrane, which increases LDLR-mediated LDL cholesterol internalization. Decreases lysosomal sterol transporter NPC1 availability to the cell, probably through NPC1-binding, hence controlling lipid transport, including cholesterol and LBPA, outside of late endosome/lysosome. Binds regio- and stereoselective ligand 20(S)-hydroxycholesterol (20(S)-OHC) which enhances TMEM97-NPC1 interaction and decreases TMEM97-PGRMC1 and TMEM97-TSPO interactions, thereby linking OHC binding to cholesterol homeostasis. Also able to bind cholesterol. Binds histatin 1 (Hst 1)/HN1 salivary peptide at the ER membrane, which is critical for increasing mitochondria-ER contacts and stimulating Hst1 wound healing properties. May alter the activity of some cytochrome P450 proteins. Although shows homologies with sterol isomerases (EXPERA domain), not able to catalyze sterol isomerization. However, may act as sensors of these molecules. Acts as a quality control factor in the ER, promoting the proteolytic degradation of nonproductive and extramitochondrial precursor proteins in the ER membrane thus removing them from the ER surface. This Macaca fascicularis (Crab-eating macaque) protein is Sigma intracellular receptor 2 (Tmem97).